Here is a 121-residue protein sequence, read N- to C-terminus: Movement protein TGBp3 (121 aa).

The tract at residues 1–40 (MHYPTEADTSTGPNPSATSAPVRPRHVTPSLSPSSSSSPS) is disordered. Residues 1 to 43 (MHYPTEADTSTGPNPSATSAPVRPRHVTPSLSPSSSSSPSPDS) are Lumenal-facing. Polar residues predominate over residues 7 to 19 (ADTSTGPNPSATS). Residues 29–40 (PSLSPSSSSSPS) show a composition bias toward low complexity. A helical membrane pass occupies residues 44–64 (FYYFLAAAVILTAALAAALLT). Over 65-121 (PNPGCTIVITGHTTIIQGSCPIPPQLVLAAHPRGLSLEQYLKFTNTLPDGSQHRSHR) the chain is Cytoplasmic.

Belongs to the Tymovirales TGBp3 protein family.

Its subcellular location is the host endoplasmic reticulum membrane. Its function is as follows. Plays a role in viral cell-to-cell propagation, by facilitating genome transport to neighboring plant cells through plasmosdesmata. May induce the formation of granular vesicles derived from the Endoplasmic reticulum, which align on actin filaments. This is Movement protein TGBp3 from Plantago asiatica (P1AMV).